The chain runs to 368 residues: Chaperone protein DnaJ (368 aa).

Residues 5 to 70 form the J domain; it reads DYYQVLGVPR…KKRKLYDTHG (66 aa). Residues 124-201 form a CR-type zinc finger; the sequence is GVERQIQIPT…CNGAGRVEDH (78 aa). Residues Cys-137, Cys-140, Cys-153, Cys-156, Cys-175, Cys-178, Cys-189, and Cys-192 each coordinate Zn(2+). 4 CXXCXGXG motif repeats span residues 137-144, 153-160, 175-182, and 189-196; these read CTHCNGSG, CGTCRGSG, CPHCGGRG, and CKVCNGAG.

This sequence belongs to the DnaJ family. Homodimer. Zn(2+) serves as cofactor.

Its subcellular location is the cytoplasm. Participates actively in the response to hyperosmotic and heat shock by preventing the aggregation of stress-denatured proteins and by disaggregating proteins, also in an autonomous, DnaK-independent fashion. Unfolded proteins bind initially to DnaJ; upon interaction with the DnaJ-bound protein, DnaK hydrolyzes its bound ATP, resulting in the formation of a stable complex. GrpE releases ADP from DnaK; ATP binding to DnaK triggers the release of the substrate protein, thus completing the reaction cycle. Several rounds of ATP-dependent interactions between DnaJ, DnaK and GrpE are required for fully efficient folding. Also involved, together with DnaK and GrpE, in the DNA replication of plasmids through activation of initiation proteins. This is Chaperone protein DnaJ from Xylella fastidiosa (strain M12).